Reading from the N-terminus, the 577-residue chain is Phosphoenolpyruvate-protein phosphotransferase (577 aa).

His191 acts as the Tele-phosphohistidine intermediate in catalysis. Residues Arg298 and Arg334 each coordinate phosphoenolpyruvate. Positions 435 and 459 each coordinate Mg(2+). Phosphoenolpyruvate contacts are provided by residues Asn458–Asp459 and Arg469. The Proton donor role is filled by Cys506.

It belongs to the PEP-utilizing enzyme family. As to quaternary structure, homodimer. It depends on Mg(2+) as a cofactor.

The protein localises to the cytoplasm. It carries out the reaction L-histidyl-[protein] + phosphoenolpyruvate = N(pros)-phospho-L-histidyl-[protein] + pyruvate. Its function is as follows. General (non sugar-specific) component of the phosphoenolpyruvate-dependent sugar phosphotransferase system (sugar PTS). This major carbohydrate active-transport system catalyzes the phosphorylation of incoming sugar substrates concomitantly with their translocation across the cell membrane. Enzyme I transfers the phosphoryl group from phosphoenolpyruvate (PEP) to the phosphoryl carrier protein (HPr). The chain is Phosphoenolpyruvate-protein phosphotransferase (ptsI) from Streptococcus equinus (Streptococcus bovis).